The following is a 387-amino-acid chain: MDLFEYQAKELFAKHNVPTTPGRVTDSAEDAKAIATEIGKPVMVKAQVKVGGRGKAGGVKYAATPDDAFTHAQNILGLDIKGHVVKKLLVAEASDIAEEYYISFLLDRSNRTYLAMCSVEGGMEIEEVAATKPDRLAKVPVNAVKGVDLAFAREIAEKGHLPAEVLDAAAVTIQKLWEVFTKEDATLVEVNPLVRTPDDQILALDGKVTLDANADFRQEGHKEFEDKDATDPLELKAKENDLNYVKLDGEVGIIGNGAGLVMSTLDVVAYAGEKHGGVKPANFLDIGGGASAEVMANGLDVILNDSQVKSVFVNVFGGITSCDAVANGIVKALEILGDEANKPLVVRLDGNNVDEGRRILAEANHPLVVQAETMDSGADKAAELANK.

The region spanning 9-236 (KELFAKHNVP…KDATDPLELK (228 aa)) is the ATP-grasp domain. ATP-binding positions include lysine 45, 52-54 (GRG), serine 94, and glutamate 99. Mg(2+)-binding residues include asparagine 191 and aspartate 205. Substrate is bound by residues asparagine 256 and 318 to 320 (GIT).

It belongs to the succinate/malate CoA ligase beta subunit family. Heterotetramer of two alpha and two beta subunits. The cofactor is Mg(2+).

It carries out the reaction succinate + ATP + CoA = succinyl-CoA + ADP + phosphate. The catalysed reaction is GTP + succinate + CoA = succinyl-CoA + GDP + phosphate. It functions in the pathway carbohydrate metabolism; tricarboxylic acid cycle; succinate from succinyl-CoA (ligase route): step 1/1. Its function is as follows. Succinyl-CoA synthetase functions in the citric acid cycle (TCA), coupling the hydrolysis of succinyl-CoA to the synthesis of either ATP or GTP and thus represents the only step of substrate-level phosphorylation in the TCA. The beta subunit provides nucleotide specificity of the enzyme and binds the substrate succinate, while the binding sites for coenzyme A and phosphate are found in the alpha subunit. This is Succinate--CoA ligase [ADP-forming] subunit beta from Mycolicibacterium gilvum (strain PYR-GCK) (Mycobacterium gilvum (strain PYR-GCK)).